Here is a 569-residue protein sequence, read N- to C-terminus: Proline--tRNA ligase (569 aa).

Belongs to the class-II aminoacyl-tRNA synthetase family. ProS type 1 subfamily. As to quaternary structure, homodimer.

It is found in the cytoplasm. The enzyme catalyses tRNA(Pro) + L-proline + ATP = L-prolyl-tRNA(Pro) + AMP + diphosphate. In terms of biological role, catalyzes the attachment of proline to tRNA(Pro) in a two-step reaction: proline is first activated by ATP to form Pro-AMP and then transferred to the acceptor end of tRNA(Pro). As ProRS can inadvertently accommodate and process non-cognate amino acids such as alanine and cysteine, to avoid such errors it has two additional distinct editing activities against alanine. One activity is designated as 'pretransfer' editing and involves the tRNA(Pro)-independent hydrolysis of activated Ala-AMP. The other activity is designated 'posttransfer' editing and involves deacylation of mischarged Ala-tRNA(Pro). The misacylated Cys-tRNA(Pro) is not edited by ProRS. This chain is Proline--tRNA ligase, found in Halalkalibacterium halodurans (strain ATCC BAA-125 / DSM 18197 / FERM 7344 / JCM 9153 / C-125) (Bacillus halodurans).